A 750-amino-acid chain; its full sequence is Photosystem I P700 chlorophyll a apoprotein A1 (750 aa).

The next 8 helical transmembrane spans lie at 70–93 (VFSA…FHGA), 156–179 (LYCT…FHYH), 195–219 (LNHH…HVSL), 291–309 (IAHH…GHMY), 346–369 (WHAQ…HHMY), 385–411 (LSLF…IFMV), 433–455 (AIIS…LYIH), and 531–549 (FLVH…LILL). [4Fe-4S] cluster contacts are provided by cysteine 573 and cysteine 582. 2 consecutive transmembrane segments (helical) span residues 589 to 610 (HVFL…HFSW) and 664 to 686 (LSAY…MFLF). Histidine 675 is a chlorophyll a' binding site. Chlorophyll a-binding residues include methionine 683 and tyrosine 691. Phylloquinone is bound at residue tryptophan 692. Residues 724 to 744 (AVGVTHYLLGGIATTWAFFLA) traverse the membrane as a helical segment.

This sequence belongs to the PsaA/PsaB family. The PsaA/B heterodimer binds the P700 chlorophyll special pair and subsequent electron acceptors. PSI consists of a core antenna complex that captures photons, and an electron transfer chain that converts photonic excitation into a charge separation. The eukaryotic PSI reaction center is composed of at least 11 subunits. The cofactor is P700 is a chlorophyll a/chlorophyll a' dimer, A0 is one or more chlorophyll a, A1 is one or both phylloquinones and FX is a shared 4Fe-4S iron-sulfur center..

It is found in the plastid. The protein resides in the chloroplast thylakoid membrane. The catalysed reaction is reduced [plastocyanin] + hnu + oxidized [2Fe-2S]-[ferredoxin] = oxidized [plastocyanin] + reduced [2Fe-2S]-[ferredoxin]. Its function is as follows. PsaA and PsaB bind P700, the primary electron donor of photosystem I (PSI), as well as the electron acceptors A0, A1 and FX. PSI is a plastocyanin-ferredoxin oxidoreductase, converting photonic excitation into a charge separation, which transfers an electron from the donor P700 chlorophyll pair to the spectroscopically characterized acceptors A0, A1, FX, FA and FB in turn. Oxidized P700 is reduced on the lumenal side of the thylakoid membrane by plastocyanin. The sequence is that of Photosystem I P700 chlorophyll a apoprotein A1 from Jasminum nudiflorum (Winter jasmine).